Reading from the N-terminus, the 337-residue chain is Heat-inducible transcription repressor HrcA (337 aa).

Belongs to the HrcA family.

Functionally, negative regulator of class I heat shock genes (grpE-dnaK-dnaJ and groELS operons). Prevents heat-shock induction of these operons. This Nocardioides sp. (strain ATCC BAA-499 / JS614) protein is Heat-inducible transcription repressor HrcA.